Consider the following 104-residue polypeptide: Signal recognition particle 19 kDa protein (104 aa).

The protein belongs to the SRP19 family. Part of the signal recognition particle protein translocation system, which is composed of SRP and FtsY. Archaeal SRP consists of a 7S RNA molecule of 300 nucleotides and two protein subunits: SRP54 and SRP19.

The protein resides in the cytoplasm. Involved in targeting and insertion of nascent membrane proteins into the cytoplasmic membrane. Binds directly to 7S RNA and mediates binding of the 54 kDa subunit of the SRP. This chain is Signal recognition particle 19 kDa protein, found in Archaeoglobus fulgidus (strain ATCC 49558 / DSM 4304 / JCM 9628 / NBRC 100126 / VC-16).